The primary structure comprises 184 residues: Ribosome-recycling factor (184 aa).

Belongs to the RRF family.

Its subcellular location is the cytoplasm. Functionally, responsible for the release of ribosomes from messenger RNA at the termination of protein biosynthesis. May increase the efficiency of translation by recycling ribosomes from one round of translation to another. The protein is Ribosome-recycling factor of Borrelia hermsii (strain HS1 / DAH).